Consider the following 71-residue polypeptide: Prokaryotic ubiquitin-like protein Pup (71 aa).

Low complexity predominate over residues 1–18 (MATRDSGGQSQTGRSQQG). Positions 1 to 42 (MATRDSGGQSQTGRSQQGEEIEDVTTEASAEAAERHAEITED) are disordered. The tract at residues 27 to 65 (EASAEAAERHAEITEDVDDLLDEIDSVLEENAEEFVRGY) is ARC ATPase binding. Residues 29–60 (SAEAAERHAEITEDVDDLLDEIDSVLEENAEE) adopt a coiled-coil conformation. Residue glutamate 71 forms an Isoglutamyl lysine isopeptide (Glu-Lys) (interchain with K-? in acceptor proteins) linkage.

Belongs to the prokaryotic ubiquitin-like protein family. Strongly interacts with the proteasome-associated ATPase ARC through a hydrophobic interface; the interacting region of Pup lies in its C-terminal half. There is one Pup binding site per ARC hexamer ring.

The protein operates within protein degradation; proteasomal Pup-dependent pathway. Protein modifier that is covalently attached to lysine residues of substrate proteins, thereby targeting them for proteasomal degradation. The tagging system is termed pupylation. The sequence is that of Prokaryotic ubiquitin-like protein Pup from Salinispora tropica (strain ATCC BAA-916 / DSM 44818 / JCM 13857 / NBRC 105044 / CNB-440).